A 463-amino-acid polypeptide reads, in one-letter code: Quinolone resistance protein NorB (463 aa).

The next 14 membrane-spanning stretches (helical) occupy residues 17-37 (IGIVLSVITFWLFAQSLVNVV), 53-73 (IAVSITALFSGMFVVGAGGLA), 86-106 (IILNILGSLLIIISNIPLLLI), 107-127 (IGRLIQGLSAACIMPATLSII), 142-162 (YWSIGSWGGSGVCSFFGGAVA), 165-185 (LGWRWIFILSIIISLIALFLI), 201-221 (FDIKGLVLLVIMLLSLNILIT), 230-250 (SLLFITLLAITIGSFSLFIVL), 273-293 (TASNFLLNGVAGTLIVANTFV), 299-319 (YSSLQAGSLSITYLVMVLIMI), 334-354 (PMLIGTGVLIVGECLISLTFL), 357-377 (ILYVICCIIGYLFFGLGLGIY), 403-423 (MASALGGAFGVALSGAVYAIV), and 435-455 (IALWLNAGMGILSFVIILLLV).

It belongs to the major facilitator superfamily. TCR/Tet family.

The protein localises to the cell membrane. Its function is as follows. Multidrug efflux pump that acts independently of NorA and is one of the factors that confers resistance against diverse quinolones and chemical compounds. The sequence is that of Quinolone resistance protein NorB (norB) from Staphylococcus aureus (strain MSSA476).